We begin with the raw amino-acid sequence, 176 residues long: Disulfide bond formation protein B (176 aa).

Residues 1-14 (MLRFLNQCSQGRGA) lie on the Cytoplasmic side of the membrane. The chain crosses the membrane as a helical span at residues 15-31 (WLLMAFTALALELTALW). Over 32–49 (FQHVMLLKPCVLCIYERC) the chain is Periplasmic. A disulfide bridge connects residues cysteine 41 and cysteine 44. A helical transmembrane segment spans residues 50–65 (ALFGVLGAALIGAIAP). Residues 66–71 (KTPLRY) lie on the Cytoplasmic side of the membrane. A helical transmembrane segment spans residues 72–89 (VAMVIWLYSAFRGVQLTY). Over 90 to 144 (EHTMLQLYPSPFATCDFMVRFPEWLPLDKWVPQVFVASGDCAERQWDFLGLEMPQ) the chain is Periplasmic. A disulfide bridge links cysteine 104 with cysteine 130. A helical transmembrane segment spans residues 145–163 (WLLGIFIAYLIVAVLVMIS). Residues 164–176 (QPFKAKKRDLFGR) are Cytoplasmic-facing.

The protein belongs to the DsbB family.

Its subcellular location is the cell inner membrane. Functionally, required for disulfide bond formation in some periplasmic proteins. Acts by oxidizing the DsbA protein. This is Disulfide bond formation protein B from Shigella sonnei (strain Ss046).